The primary structure comprises 493 residues: Cysteine--tRNA ligase (493 aa).

Cys29 is a binding site for Zn(2+). Residues 31–41 carry the 'HIGH' region motif; that stretch reads PTVYDFAHIGN. 3 residues coordinate Zn(2+): Cys227, His252, and Glu256. Residues 285–289 carry the 'KMSKS' region motif; sequence KMSKS. Lys288 provides a ligand contact to ATP.

It belongs to the class-I aminoacyl-tRNA synthetase family. In terms of assembly, monomer. The cofactor is Zn(2+).

The protein localises to the cytoplasm. It carries out the reaction tRNA(Cys) + L-cysteine + ATP = L-cysteinyl-tRNA(Cys) + AMP + diphosphate. The sequence is that of Cysteine--tRNA ligase from Rhodopseudomonas palustris (strain HaA2).